Reading from the N-terminus, the 302-residue chain is NAD kinase 2 (302 aa).

Aspartate 78 acts as the Proton acceptor in catalysis. NAD(+) contacts are provided by residues 78-79 (DG), 152-153 (NE), aspartate 182, and 193-198 (TAYSLS).

This sequence belongs to the NAD kinase family. A divalent metal cation is required as a cofactor.

The protein resides in the cytoplasm. It carries out the reaction NAD(+) + ATP = ADP + NADP(+) + H(+). Functionally, involved in the regulation of the intracellular balance of NAD and NADP, and is a key enzyme in the biosynthesis of NADP. Catalyzes specifically the phosphorylation on 2'-hydroxyl of the adenosine moiety of NAD to yield NADP. The sequence is that of NAD kinase 2 from Prochlorococcus marinus (strain NATL2A).